Here is a 297-residue protein sequence, read N- to C-terminus: N-acetylneuraminate lyase (297 aa).

The aceneuramate site is built by serine 47 and threonine 48. Catalysis depends on tyrosine 137, which acts as the Proton donor. Catalysis depends on lysine 165, which acts as the Schiff-base intermediate with substrate. Aceneuramate contacts are provided by threonine 167, glycine 189, aspartate 191, glutamate 192, and serine 208.

The protein belongs to the DapA family. NanA subfamily. In terms of assembly, homotetramer.

It is found in the cytoplasm. It catalyses the reaction aceneuramate = aldehydo-N-acetyl-D-mannosamine + pyruvate. The protein operates within amino-sugar metabolism; N-acetylneuraminate degradation; D-fructose 6-phosphate from N-acetylneuraminate: step 1/5. In terms of biological role, catalyzes the reversible aldol cleavage of N-acetylneuraminic acid (sialic acid; Neu5Ac) to form pyruvate and N-acetylmannosamine (ManNAc) via a Schiff base intermediate. This Enterobacter sp. (strain 638) protein is N-acetylneuraminate lyase.